A 405-amino-acid polypeptide reads, in one-letter code: Cystathionine gamma-lyase (405 aa).

Substrate contacts are provided by R62, Y114, and R119. Position 212 is an N6-(pyridoxal phosphate)lysine (K212). E339 serves as a coordination point for substrate.

This sequence belongs to the trans-sulfuration enzymes family. Homotetramer. Interacts with CALM in a calcium-dependent manner. Pyridoxal 5'-phosphate is required as a cofactor.

It is found in the cytoplasm. It catalyses the reaction L,L-cystathionine + H2O = 2-oxobutanoate + L-cysteine + NH4(+). The enzyme catalyses L-cysteine + H2O = hydrogen sulfide + pyruvate + NH4(+) + H(+). It carries out the reaction L-homocysteine + H2O = 2-oxobutanoate + hydrogen sulfide + NH4(+) + H(+). The catalysed reaction is L-homoserine = 2-oxobutanoate + NH4(+). It catalyses the reaction L-selenocystathionine + H2O = L-selenocysteine + 2-oxobutanoate + NH4(+). The protein operates within amino-acid biosynthesis; L-cysteine biosynthesis; L-cysteine from L-homocysteine and L-serine: step 2/2. Functionally, catalyzes the last step in the trans-sulfuration pathway from L-methionine to L-cysteine in a pyridoxal-5'-phosphate (PLP)-dependent manner, which consists on cleaving the L,L-cystathionine molecule into L-cysteine, ammonia and 2-oxobutanoate. Part of the L-cysteine derived from the trans-sulfuration pathway is utilized for biosynthesis of the ubiquitous antioxidant glutathione. Besides its role in the conversion of L-cystathionine into L-cysteine, it utilizes L-cysteine and L-homocysteine as substrates (at much lower rates than L,L-cystathionine) to produce hydrogen sulfide (H2S). In vitro, it converts two L-cysteine molecules into lanthionine and H2S, and two L-homocysteine molecules to homolanthionine and H2S, which can be particularly relevant under conditions of severe hyperhomocysteinemia. Lanthionine and homolanthionine are structural homologs of L,L-cystathionine that differ by the absence or presence of an extra methylene group, respectively. Acts as a cysteine-protein sulfhydrase by mediating sulfhydration of target proteins: sulfhydration consists of converting -SH groups into -SSH on specific cysteine residues of target proteins such as GAPDH, PTPN1 and NF-kappa-B subunit RELA, thereby regulating their function. By generating the gasotransmitter H2S, it participates in a number of physiological processes such as vasodilation, bone protection, and inflammation. Plays an essential role in myogenesis by contributing to the biogenesis of H2S in skeletal muscle tissue. Can also accept homoserine as substrate. Catalyzes the elimination of selenocystathionine (which can be derived from the diet) to yield selenocysteine, ammonia and 2-oxobutanoate. The polypeptide is Cystathionine gamma-lyase (CTH) (Sus scrofa (Pig)).